The chain runs to 341 residues: Delta(1)-pyrroline-2-carboxylate reductase (341 aa).

The active-site Charge relay system is S47. H48 (proton donor) is an active-site residue. Residue R52 coordinates substrate. 120-124 (HFSAL) contributes to the NADP(+) binding site. Residue T160 coordinates substrate. 178 to 180 (DFA) is a binding site for NADP(+). 186 to 187 (RG) provides a ligand contact to substrate. Residue E188 is the Charge relay system of the active site. NADP(+)-binding positions include 229-230 (HK) and 305-311 (RLPSERR).

This sequence belongs to the LDH2/MDH2 oxidoreductase family. In terms of assembly, homodimer.

The catalysed reaction is L-proline + NAD(+) = 1-pyrroline-2-carboxylate + NADH + H(+). It carries out the reaction L-proline + NADP(+) = 1-pyrroline-2-carboxylate + NADPH + H(+). Catalyzes the reduction of Delta(1)-pyrroline-2-carboxylate (Pyr2C) to L-proline, using NADPH as the electron donor. Is likely involved in a degradation pathway that converts cis- and trans-3-hydroxy-L-proline (c3LHyp and t3LHyp) to L-proline, which would allow S.novella to grow on c3LHyp or t3LHyp as a sole carbon source. The polypeptide is Delta(1)-pyrroline-2-carboxylate reductase (Ancylobacter novellus (strain ATCC 8093 / DSM 506 / JCM 20403 / CCM 1077 / IAM 12100 / NBRC 12443 / NCIMB 10456) (Starkeya novella)).